The chain runs to 277 residues: Large ribosomal subunit protein uL2 (277 aa).

The interval 216–277 is disordered; the sequence is RRPHNRGVAM…IIRRRKVGKG (62 aa).

The protein belongs to the universal ribosomal protein uL2 family. Part of the 50S ribosomal subunit. Forms a bridge to the 30S subunit in the 70S ribosome.

Its function is as follows. One of the primary rRNA binding proteins. Required for association of the 30S and 50S subunits to form the 70S ribosome, for tRNA binding and peptide bond formation. It has been suggested to have peptidyltransferase activity; this is somewhat controversial. Makes several contacts with the 16S rRNA in the 70S ribosome. This is Large ribosomal subunit protein uL2 from Acidiphilium cryptum (strain JF-5).